Reading from the N-terminus, the 1400-residue chain is DNA-directed RNA polymerase subunit beta' (1400 aa).

Residues C71, C73, C86, and C89 each coordinate Zn(2+). Positions 462, 464, and 466 each coordinate Mg(2+). C810, C884, C891, and C894 together coordinate Zn(2+). The interval 1377-1400 is disordered; that stretch reads REKQATIVPPAAPEAEPLALPPVE.

Belongs to the RNA polymerase beta' chain family. As to quaternary structure, the RNAP catalytic core consists of 2 alpha, 1 beta, 1 beta' and 1 omega subunit. When a sigma factor is associated with the core the holoenzyme is formed, which can initiate transcription. It depends on Mg(2+) as a cofactor. The cofactor is Zn(2+).

The catalysed reaction is RNA(n) + a ribonucleoside 5'-triphosphate = RNA(n+1) + diphosphate. DNA-dependent RNA polymerase catalyzes the transcription of DNA into RNA using the four ribonucleoside triphosphates as substrates. The polypeptide is DNA-directed RNA polymerase subunit beta' (Rhodopseudomonas palustris (strain HaA2)).